Here is a 671-residue protein sequence, read N- to C-terminus: Nucleolar GTP-binding protein 1 (671 aa).

The region spanning 169 to 350 is the OBG-type G domain; sequence RTVLICGYPN…VKNAACERLL (182 aa). GTP-binding positions include 175 to 182, 221 to 225, and 289 to 292; these read GYPNVGKS, DTPGI, and NKTD. Positions 516–671 are disordered; that stretch reads VAQNRSTVPR…KRGKGKTDRR (156 aa). Over residues 595 to 605 the composition is skewed to polar residues; that stretch reads RAMSISRSQSR. Basic residues-rich tracts occupy residues 631 to 640 and 654 to 671; these read NKSHKKRDKN and RPKH…TDRR.

It belongs to the TRAFAC class OBG-HflX-like GTPase superfamily. OBG GTPase family. NOG subfamily.

The protein localises to the nucleus. It localises to the nucleolus. Functionally, involved in the biogenesis of the 60S ribosomal subunit. This chain is Nucleolar GTP-binding protein 1, found in Arabidopsis thaliana (Mouse-ear cress).